Reading from the N-terminus, the 473-residue chain is Probable transporter MCH2 (473 aa).

Topologically, residues 1–37 (MSEERHEDHHRDVENKLNLNGKDDINGNTSISIEVPD) are cytoplasmic. A helical transmembrane segment spans residues 38-58 (GGYGWFILLAFILYNFSTWGA). Over 59–83 (NSGYAIYLAHYLENNTFAGGSKLDY) the chain is Extracellular. Asparagine 72 is a glycosylation site (N-linked (GlcNAc...) asparagine). A helical transmembrane segment spans residues 84-105 (ASIGGLAFSCGLFFAPVITWLY). The Cytoplasmic segment spans residues 106–111 (HIFSIQ). A helical transmembrane segment spans residues 112–135 (FIIGLGILFQGAALLLAAFSVTLW). Residues 136 to 141 (EIYLTQ) are Extracellular-facing. The chain crosses the membrane as a helical span at residues 142 to 163 (GVLIGFGLAFIFIPSVTLIPLW). The Cytoplasmic portion of the chain corresponds to 164-169 (FRNKRS). A helical membrane pass occupies residues 170-186 (LASGIGTAGSGLGGIVF). The Extracellular portion of the chain corresponds to 187–200 (NLGMQSILQKRGVK). The chain crosses the membrane as a helical span at residues 201–220 (WALIAQCIICTSLSTIALML). Residues 221–243 (TRTTHQGLRQHKRSYKFELLDYD) are Cytoplasmic-facing. The chain crosses the membrane as a helical span at residues 244–268 (VLSNFAVWLLFGFVSFAMLGYVVLL). The Extracellular portion of the chain corresponds to 269 to 286 (YSLSDFTVSLGYTSKQGS). A helical transmembrane segment spans residues 287-304 (YVSCMVSVGSLLGRPIVG). Residues 305–312 (HIADKYGS) lie on the Cytoplasmic side of the membrane. The helical transmembrane segment at 313 to 332 (LTVGMILHLVMAILCWAMWI) threads the bilayer. Over 333 to 342 (PCKNLATAIA) the chain is Extracellular. Residues 343–362 (FGLLVGSIMGTIWPTIASIV) form a helical membrane-spanning segment. Topologically, residues 363 to 370 (TRIVGLQK) are cytoplasmic. A helical membrane pass occupies residues 371–394 (LPGTFGSTWIFMAAFALVAPIIGL). Residues 395-408 (ELRSTDTNGNDYYR) are Extracellular-facing. The chain crosses the membrane as a helical span at residues 409–433 (TAIFVGFAYFGVSLCQWLLRGFIIA). The Cytoplasmic segment spans residues 434 to 473 (RDEIAVREAYSADQNELHLNVKLSHMSKCLFRYKQLPRRV).

It belongs to the major facilitator superfamily. Monocarboxylate porter (TC 2.A.1.13) family.

The protein localises to the membrane. Probable transporter. Does not act in the transport of monocarboxylic acids across the plasma membrane. In Saccharomyces cerevisiae (strain ATCC 204508 / S288c) (Baker's yeast), this protein is Probable transporter MCH2 (MCH2).